Here is a 124-residue protein sequence, read N- to C-terminus: Large ribosomal subunit protein eL31 (124 aa).

The protein belongs to the eukaryotic ribosomal protein eL31 family.

This chain is Large ribosomal subunit protein eL31 (RpL31), found in Aedes aegypti (Yellowfever mosquito).